The chain runs to 459 residues: Chromosomal replication initiator protein DnaA (459 aa).

The segment at 1–90 (MAVSLWQQCI…RPASKPAAPA (90 aa)) is domain I, interacts with DnaA modulators. The interval 75 to 124 (RFDIGSRPASKPAAPAASTKSPVAPAAKSPSKPSFNSNEPAATANHRSNM) is disordered. The segment covering 80–108 (SRPASKPAAPAASTKSPVAPAAKSPSKPS) has biased composition (low complexity). Residues 91 to 122 (ASTKSPVAPAAKSPSKPSFNSNEPAATANHRS) are domain II. Residues 109–124 (FNSNEPAATANHRSNM) show a composition bias toward polar residues. The domain III, AAA+ region stretch occupies residues 123–339 (NMNPTYQFDN…GALNRVIANA (217 aa)). Residues Gly167, Gly169, Lys170, and Thr171 each contribute to the ATP site. The tract at residues 340-459 (NFTGRPITID…YANLIRTLSS (120 aa)) is domain IV, binds dsDNA.

Belongs to the DnaA family. Oligomerizes as a right-handed, spiral filament on DNA at oriC.

The protein resides in the cytoplasm. In terms of biological role, plays an essential role in the initiation and regulation of chromosomal replication. ATP-DnaA binds to the origin of replication (oriC) to initiate formation of the DNA replication initiation complex once per cell cycle. Binds the DnaA box (a 9 base pair repeat at the origin) and separates the double-stranded (ds)DNA. Forms a right-handed helical filament on oriC DNA; dsDNA binds to the exterior of the filament while single-stranded (ss)DNA is stabiized in the filament's interior. The ATP-DnaA-oriC complex binds and stabilizes one strand of the AT-rich DNA unwinding element (DUE), permitting loading of DNA polymerase. After initiation quickly degrades to an ADP-DnaA complex that is not apt for DNA replication. Binds acidic phospholipids. The protein is Chromosomal replication initiator protein DnaA of Shewanella loihica (strain ATCC BAA-1088 / PV-4).